Here is a 166-residue protein sequence, read N- to C-terminus: Regulatory protein RecX (166 aa).

This sequence belongs to the RecX family.

The protein localises to the cytoplasm. Modulates RecA activity. This Escherichia coli O7:K1 (strain IAI39 / ExPEC) protein is Regulatory protein RecX.